A 296-amino-acid polypeptide reads, in one-letter code: Formamidopyrimidine-DNA glycosylase (296 aa).

Pro-2 serves as the catalytic Schiff-base intermediate with DNA. The active-site Proton donor is the Glu-3. Lys-61 functions as the Proton donor; for beta-elimination activity in the catalytic mechanism. DNA-binding residues include His-95, Arg-122, and Lys-169. An FPG-type zinc finger spans residues 255 to 289 (NAYGRNDQPCARCGTPIQRETFMNRSSYSCPRCQP). Catalysis depends on Arg-279, which acts as the Proton donor; for delta-elimination activity.

Belongs to the FPG family. Monomer. Requires Zn(2+) as cofactor.

It catalyses the reaction Hydrolysis of DNA containing ring-opened 7-methylguanine residues, releasing 2,6-diamino-4-hydroxy-5-(N-methyl)formamidopyrimidine.. The enzyme catalyses 2'-deoxyribonucleotide-(2'-deoxyribose 5'-phosphate)-2'-deoxyribonucleotide-DNA = a 3'-end 2'-deoxyribonucleotide-(2,3-dehydro-2,3-deoxyribose 5'-phosphate)-DNA + a 5'-end 5'-phospho-2'-deoxyribonucleoside-DNA + H(+). Involved in base excision repair of DNA damaged by oxidation or by mutagenic agents. Acts as a DNA glycosylase that recognizes and removes damaged bases. Has a preference for oxidized purines, such as 7,8-dihydro-8-oxoguanine (8-oxoG). Has AP (apurinic/apyrimidinic) lyase activity and introduces nicks in the DNA strand. Cleaves the DNA backbone by beta-delta elimination to generate a single-strand break at the site of the removed base with both 3'- and 5'-phosphates. The sequence is that of Formamidopyrimidine-DNA glycosylase from Thermobifida fusca (strain YX).